The sequence spans 513 residues: Meiotically up-regulated gene 133 protein (513 aa).

Belongs to the UPF0300 family.

The protein localises to the golgi apparatus. It localises to the vacuole membrane. Has a role in meiosis. This chain is Meiotically up-regulated gene 133 protein (mug133), found in Schizosaccharomyces pombe (strain 972 / ATCC 24843) (Fission yeast).